Reading from the N-terminus, the 87-residue chain is Beta-toxin Ct17 (87 aa).

The first 19 residues, 1–19 (MNSLLMITACLVLIGTVWA), serve as a signal peptide directing secretion. The LCN-type CS-alpha/beta domain occupies 20-85 (KKDGYLVDKT…TWPLPNKRCG (66 aa)). Disulfide bonds link Cys-31/Cys-84, Cys-35/Cys-60, Cys-44/Cys-65, and Cys-48/Cys-67. Cys-84 is subject to Cysteine amide.

Belongs to the long (4 C-C) scorpion toxin superfamily. Sodium channel inhibitor family. Beta subfamily. In terms of tissue distribution, expressed by the venom gland.

It localises to the secreted. In terms of biological role, beta toxins bind voltage-independently at site-4 of sodium channels (Nav) and shift the voltage of activation toward more negative potentials thereby affecting sodium channel activation and promoting spontaneous and repetitive firing. Is possibly lethal to mice, freshwater shrimp and crickets. The polypeptide is Beta-toxin Ct17 (Centruroides tecomanus (Scorpion)).